The primary structure comprises 321 residues: Auxin-responsive protein IAA8 (321 aa).

The EAR-like (transcriptional repression) motif lies at 54-58; the sequence is LRLGL. The PB1 domain occupies 199–301; that stretch reads VLFVKVSMDG…TCQKLKIMKG (103 aa).

Belongs to the Aux/IAA family. Homodimers and heterodimers. Interacts with TPL. Highly expressed in the whole plant.

It is found in the nucleus. Aux/IAA proteins are short-lived transcriptional factors that function as repressors of early auxin response genes at low auxin concentrations. Repression is thought to result from the interaction with auxin response factors (ARFs), proteins that bind to the auxin-responsive promoter element (AuxRE). Formation of heterodimers with ARF proteins may alter their ability to modulate early auxin response genes expression. This is Auxin-responsive protein IAA8 (IAA8) from Arabidopsis thaliana (Mouse-ear cress).